The sequence spans 328 residues: D-cysteine desulfhydrase (328 aa).

Lys51 carries the N6-(pyridoxal phosphate)lysine modification.

This sequence belongs to the ACC deaminase/D-cysteine desulfhydrase family. In terms of assembly, homodimer. Pyridoxal 5'-phosphate serves as cofactor.

It catalyses the reaction D-cysteine + H2O = hydrogen sulfide + pyruvate + NH4(+) + H(+). Functionally, catalyzes the alpha,beta-elimination reaction of D-cysteine and of several D-cysteine derivatives. It could be a defense mechanism against D-cysteine. The sequence is that of D-cysteine desulfhydrase from Shigella sonnei (strain Ss046).